The chain runs to 447 residues: Glycerol-3-phosphate acyltransferase ATS11, chloroplastic (447 aa).

Residues 1–21 (MFILSSSSSLPSPLSLSSSRV) form a disordered region. Residues 1–48 (MFILSSSSSLPSPLSLSSSRVSLPPPSSSSLNLLPLSPHFQPPNLACS) constitute a chloroplast transit peptide. The HXXXXD motif motif lies at 217 to 222 (HQTEAD).

This sequence belongs to the GPAT/DAPAT family.

It is found in the plastid. The protein resides in the chloroplast stroma. It catalyses the reaction a fatty acyl-[ACP] + sn-glycerol 3-phosphate = a 1-acyl-sn-glycero-3-phosphate + holo-[ACP]. The catalysed reaction is sn-glycerol 3-phosphate + an acyl-CoA = a 1-acyl-sn-glycero-3-phosphate + CoA. It functions in the pathway phospholipid metabolism; CDP-diacylglycerol biosynthesis; CDP-diacylglycerol from sn-glycerol 3-phosphate: step 1/3. In terms of biological role, esterifies the acyl-group from acyl-acyl carrier proteins (acyl-ACPs) to the sn-1 position of glycerol-3-phosphate. The physiological acyl donors in chloroplasts are acyl-ACPs, but acyl-CoAs are used as artificial donor for in vitro reactions. The enzyme from chilling-resistant plants discriminates against non-fluid palmitic acid and selects oleic acid whereas the enzyme from sensitive plants accepts both fatty acids. Squash is chilling-sensitive. Preferably utilizes oleoyl groups (18:1-ACP) and has lower affinity to palmitoyl (16:0-ACP) and stearoyl groups (18:0-ACP). This Cucurbita moschata (Winter crookneck squash) protein is Glycerol-3-phosphate acyltransferase ATS11, chloroplastic.